The primary structure comprises 337 residues: Ferredoxin--NADP reductase (337 aa).

FAD contacts are provided by Asp35, Gln43, Tyr48, Ala88, Phe122, Asp289, and Thr330.

Belongs to the ferredoxin--NADP reductase type 2 family. Homodimer. FAD serves as cofactor.

It catalyses the reaction 2 reduced [2Fe-2S]-[ferredoxin] + NADP(+) + H(+) = 2 oxidized [2Fe-2S]-[ferredoxin] + NADPH. This is Ferredoxin--NADP reductase from Ehrlichia ruminantium (strain Gardel).